Consider the following 157-residue polypeptide: Protein Smg homolog (157 aa).

Belongs to the Smg family.

This is Protein Smg homolog from Shewanella denitrificans (strain OS217 / ATCC BAA-1090 / DSM 15013).